The chain runs to 865 residues: Bifunctional uridylyltransferase/uridylyl-removing enzyme (865 aa).

The interval 1–318 (MPHVDLNPLK…FPRPDSDARL (318 aa)) is uridylyltransferase. Residues 319-675 (IDDDFRNLRE…VRPTEHGEGL (357 aa)) form a uridylyl-removing region. An HD domain is found at 437–559 (VDQHTLAVVR…VGDERRLAAL (123 aa)). 2 ACT domains span residues 676–762 (QVMV…RLPH) and 789–865 (RLSV…QQAA). A disordered region spans residues 747–767 (DPHAARHAHAPRRLPHSHARR). Basic residues predominate over residues 751-767 (ARHAHAPRRLPHSHARR).

It belongs to the GlnD family. The cofactor is Mg(2+).

It carries out the reaction [protein-PII]-L-tyrosine + UTP = [protein-PII]-uridylyl-L-tyrosine + diphosphate. The catalysed reaction is [protein-PII]-uridylyl-L-tyrosine + H2O = [protein-PII]-L-tyrosine + UMP + H(+). Uridylyltransferase (UTase) activity is inhibited by glutamine, while glutamine activates uridylyl-removing (UR) activity. Functionally, modifies, by uridylylation and deuridylylation, the PII regulatory proteins (GlnB and homologs), in response to the nitrogen status of the cell that GlnD senses through the glutamine level. Under low glutamine levels, catalyzes the conversion of the PII proteins and UTP to PII-UMP and PPi, while under higher glutamine levels, GlnD hydrolyzes PII-UMP to PII and UMP (deuridylylation). Thus, controls uridylylation state and activity of the PII proteins, and plays an important role in the regulation of nitrogen assimilation and metabolism. This chain is Bifunctional uridylyltransferase/uridylyl-removing enzyme, found in Bordetella bronchiseptica (strain ATCC BAA-588 / NCTC 13252 / RB50) (Alcaligenes bronchisepticus).